We begin with the raw amino-acid sequence, 729 residues long: Fatty acid oxidation complex subunit alpha (729 aa).

The tract at residues 1-189 (MLYKGDTLYL…KIGLVDGVVK (189 aa)) is enoyl-CoA hydratase/isomerase. Asp-296 lines the substrate pocket. Positions 311–729 (ETPKQAAVLG…ARPVGSLKTA (419 aa)) are 3-hydroxyacyl-CoA dehydrogenase. Residues Met-324, Asp-343, 400–402 (VVE), Lys-407, and Ser-429 contribute to the NAD(+) site. His-450 functions as the For 3-hydroxyacyl-CoA dehydrogenase activity in the catalytic mechanism. An NAD(+)-binding site is contributed by Asn-453. Positions 500 and 660 each coordinate substrate. Residues 708-729 (RHNEPYYPPVEPARPVGSLKTA) form a disordered region.

It in the N-terminal section; belongs to the enoyl-CoA hydratase/isomerase family. The protein in the C-terminal section; belongs to the 3-hydroxyacyl-CoA dehydrogenase family. In terms of assembly, heterotetramer of two alpha chains (FadB) and two beta chains (FadA).

It catalyses the reaction a (3S)-3-hydroxyacyl-CoA + NAD(+) = a 3-oxoacyl-CoA + NADH + H(+). The enzyme catalyses a (3S)-3-hydroxyacyl-CoA = a (2E)-enoyl-CoA + H2O. It carries out the reaction a 4-saturated-(3S)-3-hydroxyacyl-CoA = a (3E)-enoyl-CoA + H2O. The catalysed reaction is (3S)-3-hydroxybutanoyl-CoA = (3R)-3-hydroxybutanoyl-CoA. It catalyses the reaction a (3Z)-enoyl-CoA = a 4-saturated (2E)-enoyl-CoA. The enzyme catalyses a (3E)-enoyl-CoA = a 4-saturated (2E)-enoyl-CoA. The protein operates within lipid metabolism; fatty acid beta-oxidation. In terms of biological role, involved in the aerobic and anaerobic degradation of long-chain fatty acids via beta-oxidation cycle. Catalyzes the formation of 3-oxoacyl-CoA from enoyl-CoA via L-3-hydroxyacyl-CoA. It can also use D-3-hydroxyacyl-CoA and cis-3-enoyl-CoA as substrate. The sequence is that of Fatty acid oxidation complex subunit alpha from Salmonella choleraesuis (strain SC-B67).